The chain runs to 853 residues: DNA mismatch repair protein MutS (853 aa).

Residue 614–621 (GPNMGGKS) participates in ATP binding.

It belongs to the DNA mismatch repair MutS family.

In terms of biological role, this protein is involved in the repair of mismatches in DNA. It is possible that it carries out the mismatch recognition step. This protein has a weak ATPase activity. This chain is DNA mismatch repair protein MutS, found in Escherichia coli (strain SE11).